A 226-amino-acid chain; its full sequence is Gap junction beta-2 protein (226 aa).

The stretch at 2–13 (DWSALQTILGGV) is an intramembrane region. At 14-20 (NKHSTSI) the chain is on the cytoplasmic side. A helical membrane pass occupies residues 21-40 (GKIWLTVLFIFRIMILVVAA). Residues 41–73 (KEVWGDEQADFVCNTLQPGCKNVCYDHYFPISH) are Extracellular-facing. Positions 42, 45, and 47 each coordinate Ca(2+). 3 disulfides stabilise this stretch: Cys-53-Cys-180, Cys-60-Cys-174, and Cys-64-Cys-169. Residues 74-94 (IRLWALQLIFVSTPALLVAMH) form a helical membrane-spanning segment. Over 95-135 (VAYYRHEKKRKFIRGEIKTEFKDIEEIKNQKVRIEGSLWWT) the chain is Cytoplasmic. The helical transmembrane segment at 136–156 (YTGSIFFRVIFEAAFMYVFYV) threads the bilayer. The Extracellular portion of the chain corresponds to 157–189 (MYDGFAMQRLVKCNAWPCPNTVDCFVSRPTEKT). Residues 190–210 (VFTVFMIAVSGICILLNVTEL) form a helical membrane-spanning segment. The Cytoplasmic portion of the chain corresponds to 211–226 (CYLLIRFCSGKSKKPV).

The protein belongs to the connexin family. Beta-type (group I) subfamily. A hemichannel or connexon is composed of a hexamer of connexins. A functional gap junction is formed by the apposition of two hemichannels. Forms heteromeric channels with GJB4. Interacts with CNST.

It localises to the cell membrane. Its subcellular location is the cell junction. The protein resides in the gap junction. Structural component of gap junctions. Gap junctions are dodecameric channels that connect the cytoplasm of adjoining cells. They are formed by the docking of two hexameric hemichannels, one from each cell membrane. Small molecules and ions diffuse from one cell to a neighboring cell via the central pore. This is Gap junction beta-2 protein (GJB2) from Ovis aries (Sheep).